Here is a 553-residue protein sequence, read N- to C-terminus: Putative transport protein PM1071 (553 aa).

5 helical membrane passes run 4–24, 28–48, 65–85, 91–111, and 157–177; these read IAIT…IGHW, GVGL…HFTN, FGLI…FFAS, LKLN…VIVI, and MAYA…MWLI. 2 RCK C-terminal domains span residues 190 to 276 and 277 to 361; these read KNFL…VLGE and EVDV…ILGN. 6 helical membrane-spanning segments follow: residues 371-391, 403-425, 439-459, 464-484, 496-516, and 533-553; these read MLPV…PFHI, AGGP…LYWF, IVLF…DTLV, LEWM…VGIV, LCGL…ANAI, and LVMF…WTLL.

The protein belongs to the AAE transporter (TC 2.A.81) family. YidE subfamily.

It is found in the cell membrane. In Pasteurella multocida (strain Pm70), this protein is Putative transport protein PM1071.